Reading from the N-terminus, the 211-residue chain is Histidine biosynthesis bifunctional protein HisIE (211 aa).

The phosphoribosyl-AMP cyclohydrolase stretch occupies residues 1 to 107; it reads MNKLIDFSKG…FNSEIESRFK (107 aa). The phosphoribosyl-ATP pyrophosphohydrolase stretch occupies residues 108–211; the sequence is IQALAQTIHQ…KGERKEVREW (104 aa).

In the N-terminal section; belongs to the PRA-CH family. The protein in the C-terminal section; belongs to the PRA-PH family.

Its subcellular location is the cytoplasm. The enzyme catalyses 1-(5-phospho-beta-D-ribosyl)-ATP + H2O = 1-(5-phospho-beta-D-ribosyl)-5'-AMP + diphosphate + H(+). It carries out the reaction 1-(5-phospho-beta-D-ribosyl)-5'-AMP + H2O = 1-(5-phospho-beta-D-ribosyl)-5-[(5-phospho-beta-D-ribosylamino)methylideneamino]imidazole-4-carboxamide. Its pathway is amino-acid biosynthesis; L-histidine biosynthesis; L-histidine from 5-phospho-alpha-D-ribose 1-diphosphate: step 2/9. The protein operates within amino-acid biosynthesis; L-histidine biosynthesis; L-histidine from 5-phospho-alpha-D-ribose 1-diphosphate: step 3/9. This chain is Histidine biosynthesis bifunctional protein HisIE, found in Staphylococcus epidermidis (strain ATCC 35984 / DSM 28319 / BCRC 17069 / CCUG 31568 / BM 3577 / RP62A).